Here is a 57-residue protein sequence, read N- to C-terminus: Granulin-3 (57 aa).

2 disulfide bridges follow: cysteine 4–cysteine 16 and cysteine 10–cysteine 26.

Belongs to the granulin family. Post-translationally, granulins are disulfide bridged. Ubiquitous.

It is found in the secreted. Functionally, granulins have possible cytokine-like activity. They may play a role in inflammation, wound repair, and tissue remodeling. The protein is Granulin-3 of Cyprinus carpio (Common carp).